Here is a 75-residue protein sequence, read N- to C-terminus: MQVLVRDNNVDQALRALKKKMQREGIFREMKMRGHYEKPSEKRAREKAEAVRRARKLARKRAQREGLIGGRPGAR.

The interval 52 to 75 (RRARKLARKRAQREGLIGGRPGAR) is disordered. Basic residues predominate over residues 53–62 (RARKLARKRA).

Belongs to the bacterial ribosomal protein bS21 family.

This is Small ribosomal subunit protein bS21 from Brucella anthropi (strain ATCC 49188 / DSM 6882 / CCUG 24695 / JCM 21032 / LMG 3331 / NBRC 15819 / NCTC 12168 / Alc 37) (Ochrobactrum anthropi).